We begin with the raw amino-acid sequence, 494 residues long: Alpha-amylase-related protein (494 aa).

The signal sequence occupies residues 1-20 (MFKFASAVILCLVAASSTQA). Gln21 bears the Pyrrolidone carboxylic acid mark. Cys48 and Cys104 form a disulfide bridge. Ca(2+) is bound by residues Asn118, Gln169, and Asp178. The cysteines at positions 157 and 171 are disulfide-linked. Chloride is bound at residue Arg206. The active-site Nucleophile is the Asp208. His212 is a Ca(2+) binding site. Glu245 functions as the Proton donor in the catalytic mechanism. Chloride is bound by residues Asn308 and Arg343. 3 cysteine pairs are disulfide-bonded: Cys376–Cys382, Cys418–Cys441, and Cys448–Cys460.

This sequence belongs to the glycosyl hydrolase 13 family. In terms of assembly, monomer. The cofactor is Ca(2+). Chloride is required as a cofactor.

It is found in the secreted. It catalyses the reaction Endohydrolysis of (1-&gt;4)-alpha-D-glucosidic linkages in polysaccharides containing three or more (1-&gt;4)-alpha-linked D-glucose units.. In Drosophila ercepeae (Fruit fly), this protein is Alpha-amylase-related protein (Amyrel).